Here is a 384-residue protein sequence, read N- to C-terminus: MAFLMKKKKFKFQTTFTLEELTAVPFVNGVLFCKVRLLDGGDFVSLSSREEVQENCVRWRKRFTFVCKMSANPATGLLDPCVFRVSVRKELKGGKAYSKLGFADLNLAEFAGSGSTVRCCLLEGYDTKNTRQDNSILKVTIGMFLLSGDPCFKTPPSTAKSISIPGQDSSLQLTCKGGGTSSGGSSTNSLTGSRPPKARPTILSSGLPEEPDQNLSSPEEVFHSGHSRNSSYASQQSKISGYSTEHSRSSSLSDLTHRRNTSTSSSASGGLGMTVEGPEGSEREHRPPEKPPRPPRPLHLSDRSFRRKKDSVESHPTWVDDTRIDADAIVEKIVQSQDFTDGSNTEDSNLRLFVSRDGSATLSGIQLATRVSSGVYEPVVIESH.

The C2 NT-type domain occupies 2 to 145 (AFLMKKKKFK…ILKVTIGMFL (144 aa)). Positions 129–138 (NTRQDNSILK) are required for interaction with TNFRSF11A/RANK. Residues 173 to 315 (LTCKGGGTSS…RRKKDSVESH (143 aa)) form a disordered region. Residues 183 to 193 (GGSSTNSLTGS) show a composition bias toward low complexity. Residues 227 to 254 (SRNSSYASQQSKISGYSTEHSRSSSLSD) are compositionally biased toward polar residues. Composition is skewed to basic and acidic residues over residues 280–292 (GSER…EKPP) and 299–315 (HLSD…VESH).

It belongs to the EEIG family. In terms of assembly, part of a complex composed of EEIG1, TNFRSF11A/RANK, PLCG2, GAB2, TEC and BTK; complex formation increases in the presence of TNFSF11/RANKL. Interacts with PRDM1/BLIMP1; following TNFSF11/RANKL stimulation in bone marrow-derived macrophages, the interaction promotes the binding of PRDM1/BLIMP1 to the gene promoter of IRF8.

The protein localises to the nucleus. It is found in the cytoplasm. It localises to the membrane raft. In terms of biological role, key component of TNFSF11/RANKL- and TNF-induced osteoclastogenesis pathways, thereby mediates bone resorption in pathological bone loss conditions. Required for TNFSF11/RANKL-induced osteoclastogenesis via its interaction with TNFRSF11A/RANK, thereby facilitates the downsteam transcription of NFATC1 and activation of PLCG2. Facilitates recruitment of the transcriptional repressor PRDM1/BLIMP1 to the promoter of the anti-osteoclastogenesis gene IRF8, thereby resulting in transcription of osteoclast differentiation factors. May play a role in estrogen action. This Homo sapiens (Human) protein is Early estrogen-induced gene 1 protein.